Consider the following 232-residue polypeptide: Mediator of RNA polymerase II transcription subunit 18 (232 aa).

The protein belongs to the Mediator complex subunit 18 family. As to quaternary structure, component of the Mediator complex.

Its subcellular location is the nucleus. Functionally, component of the Mediator complex, a coactivator involved in the regulated transcription of nearly all RNA polymerase II-dependent genes. Mediator functions as a bridge to convey information from gene-specific regulatory proteins to the basal RNA polymerase II transcription machinery. Mediator is recruited to promoters by direct interactions with regulatory proteins and serves as a scaffold for the assembly of a functional preinitiation complex with RNA polymerase II and the general transcription factors. This is Mediator of RNA polymerase II transcription subunit 18 (mdt-18) from Caenorhabditis elegans.